The following is a 217-amino-acid chain: N-(5'-phosphoribosyl)anthranilate isomerase (217 aa).

It belongs to the TrpF family.

It catalyses the reaction N-(5-phospho-beta-D-ribosyl)anthranilate = 1-(2-carboxyphenylamino)-1-deoxy-D-ribulose 5-phosphate. Its pathway is amino-acid biosynthesis; L-tryptophan biosynthesis; L-tryptophan from chorismate: step 3/5. This Chlorobium phaeobacteroides (strain BS1) protein is N-(5'-phosphoribosyl)anthranilate isomerase.